The chain runs to 678 residues: Auxin response factor 7 (678 aa).

Residues 128–230 (FCKTLTASDT…ELRVGVRRLM (103 aa)) constitute a DNA-binding region (TF-B3). Disordered regions lie at residues 360–386 (AVSN…NSIA) and 502–547 (GVGQ…SRQV). Residues 548-641 (RSCTKVIMQG…EAKQLTPKSK (94 aa)) form the PB1 domain. The disordered stretch occupies residues 643-678 (PIIGDAIKPNPNKQSPESDMPHSDLDSTAPVTDKDC).

Belongs to the ARF family. In terms of assembly, homodimers and heterodimers. Expressed in roots, culms, leaves and young panicles.

The protein resides in the nucleus. Its function is as follows. Auxin response factors (ARFs) are transcriptional factors that bind specifically to the DNA sequence 5'-TGTCTC-3' found in the auxin-responsive promoter elements (AuxREs). The sequence is that of Auxin response factor 7 (ARF7) from Oryza sativa subsp. japonica (Rice).